We begin with the raw amino-acid sequence, 278 residues long: UPF0276 protein Swit_4400 (278 aa).

It belongs to the UPF0276 family.

The polypeptide is UPF0276 protein Swit_4400 (Rhizorhabdus wittichii (strain DSM 6014 / CCUG 31198 / JCM 15750 / NBRC 105917 / EY 4224 / RW1) (Sphingomonas wittichii)).